A 111-amino-acid chain; its full sequence is Flagellar hook-basal body complex protein FliE (111 aa).

The protein belongs to the FliE family.

It is found in the bacterial flagellum basal body. In Sinorhizobium fredii (strain NBRC 101917 / NGR234), this protein is Flagellar hook-basal body complex protein FliE.